Consider the following 2298-residue polypeptide: Non-reducing polyketide synthase pgmA (2298 aa).

The interval 8-333 (LFIFGDQTLD…IYNVLKQSPL (326 aa)) is N-terminal acylcarrier protein transacylase domain (SAT). The disordered stretch occupies residues 336 to 361 (YLSSKPAQSRQPVSNEGAPEPGNGRQ). A compositionally biased stretch (polar residues) spans 340-349 (KPAQSRQPVS). Residues 360–798 (RQKLAIIGMS…GGNSALLVED (439 aa)) enclose the Ketosynthase family 3 (KS3) domain. Active-site for beta-ketoacyl synthase activity residues include C532, H667, and H714. The segment at 901 to 1193 (VFAFTGQGAH…GMVKGVLGPQ (293 aa)) is acyl/malonyl transferases. The active-site For acyl/malonyl transferase activity is S994. The segment at 1283–1415 (HRVVEETHDS…CVVRFRDRGL (133 aa)) is N-terminal hotdog fold. One can recognise a PKS/mFAS DH domain in the interval 1283 to 1589 (HRVVEETHDS…IQGVPRRVLK (307 aa)). Residues 1294–1586 (KTRIVIEADI…QISIQGVPRR (293 aa)) are product template (PT) domainn. The active-site Proton acceptor; for dehydratase activity is the H1315. Residues 1438 to 1589 (VTGETARFNR…IQGVPRRVLK (152 aa)) form a C-terminal hotdog fold region. Catalysis depends on D1502, which acts as the Proton donor; for dehydratase activity. A disordered region spans residues 1619 to 1642 (YPVANGHAQATPTSGPVNGEPRPS). A Carrier 1 domain is found at 1641–1716 (PSRFPRALEI…SLRALLSEPE (76 aa)). O-(pantetheine 4'-phosphoryl)serine is present on S1675. Positions 1716 to 1762 (ERSTNGMPAASAKDTSRFDEIPPMNGHKTNGHVMNGHSNGSSNGLPD) are disordered. Residues 1751 to 1760 (GHSNGSSNGL) show a composition bias toward polar residues. One can recognise a Carrier 2 domain in the interval 1765 to 1840 (KVDFQRVLQI…DLKRYLFPQD (76 aa)). The residue at position 1799 (S1799) is an O-(pantetheine 4'-phosphoryl)serine. Residues 1927-2178 (VTGASGSLGG…YWTPVEEVAG (252 aa)) are reductase (R) domain.

The protein operates within pigment biosynthesis. It functions in the pathway secondary metabolite biosynthesis. Non-reducing polyketide synthase; part of the gene cluster that mediates the biosynthesis of pleosporalin A, ascomycone A, as well as a third cryptic naphthoquinone derived pigment, all responsible for the coloration of conidia. The non-reducing polyketide synthase pgmA is responsible for the condensation of seven acetyl-CoA units to produce the cyclized heptaketide 3-acetonyl-1,6,8-trihydroxy-2-naphthaldehyde. The pathway begins with the biosynthesis of the cyclized heptaketide 3-acetonyl-1,6,8-trihydroxy-2-naphthaldehyde by the NR-PKS pgmA. The C-6 hydroxyl group is further methylated by the O-methyltransferase pgmB to yield fusarubinaldehyde which is in turn oxidized by the cytochrome P450 monooxygenase pgmC at C-9. The C-1 hydroxyl group is then methylated spontaneously. Although pgmE, pgmD and pgmH are essential for the production of pleosporalin A, it is not the case for the 2 other final products and it remains difficult to assign a specific function to each enzyme. PgmF and pgmG seem not to be involved in pigment biosynthesis although they were regulated by the cluster-specific transcription factor pgmR. This is Non-reducing polyketide synthase pgmA from Aspergillus terreus (strain NIH 2624 / FGSC A1156).